The primary structure comprises 225 residues: Uridylate kinase (225 aa).

ATP is bound at residue 7–11 (KISGS). Position 44 (G44) interacts with UMP. ATP is bound by residues G45 and R49. UMP contacts are provided by residues D66 and 114–120 (FQPGQST). Residues Y147 and E150 each contribute to the ATP site.

It belongs to the UMP kinase family. As to quaternary structure, homohexamer.

It is found in the cytoplasm. It carries out the reaction UMP + ATP = UDP + ADP. Its pathway is pyrimidine metabolism; CTP biosynthesis via de novo pathway; UDP from UMP (UMPK route): step 1/1. Its activity is regulated as follows. Inhibited by UTP. In terms of biological role, catalyzes the reversible phosphorylation of UMP to UDP. The polypeptide is Uridylate kinase (Aeropyrum pernix (strain ATCC 700893 / DSM 11879 / JCM 9820 / NBRC 100138 / K1)).